The following is a 383-amino-acid chain: Lipid-A-disaccharide synthase (383 aa).

It belongs to the LpxB family.

It carries out the reaction 2-N,3-O-bis[(3R)-3-hydroxytetradecanoyl]-alpha-D-glucosaminyl 1-phosphate + UDP-2-N,3-O-bis[(3R)-3-hydroxytetradecanoyl]-alpha-D-glucosamine = lipid A disaccharide (E. coli) + UDP + H(+). The enzyme catalyses a lipid X + a UDP-2-N,3-O-bis[(3R)-3-hydroxyacyl]-alpha-D-glucosamine = a lipid A disaccharide + UDP + H(+). The protein operates within glycolipid biosynthesis; lipid IV(A) biosynthesis; lipid IV(A) from (3R)-3-hydroxytetradecanoyl-[acyl-carrier-protein] and UDP-N-acetyl-alpha-D-glucosamine: step 5/6. Its function is as follows. Condensation of UDP-2,3-diacylglucosamine and 2,3-diacylglucosamine-1-phosphate to form lipid A disaccharide, a precursor of lipid A, a phosphorylated glycolipid that anchors the lipopolysaccharide to the outer membrane of the cell. The sequence is that of Lipid-A-disaccharide synthase from Pectobacterium carotovorum subsp. carotovorum (strain PC1).